The following is a 235-amino-acid chain: Protein fmp52-1, mitochondrial (235 aa).

The N-terminal 36 residues, 1-36 (MANTALIGCTGMVGSFILNNLLAHPSVARVDTISRR), are a transit peptide targeting the mitochondrion.

It belongs to the FMP52 family.

The protein resides in the mitochondrion outer membrane. This chain is Protein fmp52-1, mitochondrial (fmp521), found in Aspergillus oryzae (strain ATCC 42149 / RIB 40) (Yellow koji mold).